The primary structure comprises 317 residues: Ribonuclease Z (317 aa).

Positions 61, 63, 65, 66, 139, 210, and 268 each coordinate Zn(2+). Residue D65 is the Proton acceptor of the active site.

Belongs to the RNase Z family. Homodimer. Requires Zn(2+) as cofactor.

The enzyme catalyses Endonucleolytic cleavage of RNA, removing extra 3' nucleotides from tRNA precursor, generating 3' termini of tRNAs. A 3'-hydroxy group is left at the tRNA terminus and a 5'-phosphoryl group is left at the trailer molecule.. Its activity is regulated as follows. Inhibited by high salt concentrations. Functionally, zinc phosphodiesterase, which displays some tRNA 3'-processing endonuclease activity. Probably involved in tRNA maturation, by removing a 3'-trailer from precursor tRNA. Can also catalyze the 5' end cleavage of the 5S rRNA. The sequence is that of Ribonuclease Z from Haloferax volcanii (strain ATCC 29605 / DSM 3757 / JCM 8879 / NBRC 14742 / NCIMB 2012 / VKM B-1768 / DS2) (Halobacterium volcanii).